The primary structure comprises 106 residues: Large ribosomal subunit protein eL42 (106 aa).

Zn(2+) contacts are provided by C12, C17, C74, and C77.

It belongs to the eukaryotic ribosomal protein eL42 family. As to quaternary structure, component of the large ribosomal subunit. Mature ribosomes consist of a small (40S) and a large (60S) subunit. The 40S subunit contains about 32 different proteins and 1 molecule of RNA (18S). The 60S subunit contains 45 different proteins and 3 molecules of RNA (25S, 5.8S and 5S). Zn(2+) serves as cofactor.

Its subcellular location is the cytoplasm. In terms of biological role, component of the ribosome, a large ribonucleoprotein complex responsible for the synthesis of proteins in the cell. The small ribosomal subunit (SSU) binds messenger RNAs (mRNAs) and translates the encoded message by selecting cognate aminoacyl-transfer RNA (tRNA) molecules. The large subunit (LSU) contains the ribosomal catalytic site termed the peptidyl transferase center (PTC), which catalyzes the formation of peptide bonds, thereby polymerizing the amino acids delivered by tRNAs into a polypeptide chain. The nascent polypeptides leave the ribosome through a tunnel in the LSU and interact with protein factors that function in enzymatic processing, targeting, and the membrane insertion of nascent chains at the exit of the ribosomal tunnel. This is Large ribosomal subunit protein eL42 (RPL44) from Candida albicans (strain SC5314 / ATCC MYA-2876) (Yeast).